The chain runs to 786 residues: MRRSLAPSQRLGVRIKSKDAFTPPLQKKNKRVCQIELQKRQSALRDATNTVELPLPIRFTANSDYEQAIAKVLARKFKVPIANYVPDYGGNRTLGVRRSIVRRALHDPQACNALVLYTPPAYTEHERMSLDPSKLQVHVVVDPILSNVLRPHQREGVRFMYECVEGKRGNFNGCIMADEMGLGKTLQCVTLTWTLLRQSPDCKPTISKAIVVSPSSLVKNWEKEFTKWLHGRMHCLAMEGGSKEDTTRTLEQFAMNTATRCGTPVLLISYETFRLYSHILCKTEVGMVICDEGHRLKNSDNLTYQALMGLKTKRRVLLSGTPIQNDLTEYFSLVNFVNPEMLGTGSDFKRNFENAILRGQNADSTDAERERALEKTQELVGLVNQCIIRRTNQILTKYLPVKFEMVVCAKLTAVQLQLYTNFLKSDQVRRSLADCTDKTTLTALADITTLKKLCNHPDLIYEKIAAREKGFENSQNVLPPNYKPKDVNPELSGKFMLLDFMLAAIRANSDDKVVLISNYTQTLDLFEQLARKRKYSYVRLDGTMTIKKRSKVVDRFNDPATDCFLFMLSSKAGGCGLNLIGANRLFMFDPDWNPANDEQAMARVWRDGQKKPCYIYRLVASGSIEEKILQRQTHKKSLSSSIIDNNDSAEKHFTRDDLKDLFRFEANVLSDTHNKLKCKRCFQDVQRQPPPENSDCTSHLSQWFHCSNNRGLPDSILSQAWMASKCVSFVFHHRSQGDAKQPTCITEDNHSEQPQLNSKRNANSVLENDDDEDFDPNSSDEKFLGF.

A required for chromatin remodeling, strand pairing activities and coupling of ATPase activity region spans residues 2–9 (RRSLAPSQ). Phosphothreonine is present on Thr-22. Residues 165–340 (EGKRGNFNGC…FSLVNFVNPE (176 aa)) form the Helicase ATP-binding domain. 178 to 185 (DEMGLGKT) contributes to the ATP binding site. The short motif at 291 to 294 (DEGH) is the DEGH box element. In terms of domain architecture, Helicase C-terminal spans 497–654 (LLDFMLAAIR…NNDSAEKHFT (158 aa)). Positions 740 to 786 (KQPTCITEDNHSEQPQLNSKRNANSVLENDDDEDFDPNSSDEKFLGF) are disordered. Residues 752 to 766 (EQPQLNSKRNANSVL) show a composition bias toward polar residues.

Belongs to the SNF2/RAD54 helicase family. Interacts (via N-terminus) with spn-A/Rad51.

The protein resides in the nucleus. Involved in mitotic DNA repair and meiotic recombination. Functions in the recombinational DNA repair pathway. Essential for interhomolog gene conversion (GC), but may have a less important role in intersister GC than spn-A/Rad51. In the presence of DNA, spn-A/Rad51 enhances the ATPase activity of okr/Rad54. The chain is DNA repair and recombination protein RAD54-like from Drosophila virilis (Fruit fly).